Consider the following 364-residue polypeptide: tRNA 2-selenouridine synthase (364 aa).

The 124-residue stretch at 14 to 137 (LIADTPIIDV…LRQTAIQATI (124 aa)) folds into the Rhodanese domain. Catalysis depends on Cys-97, which acts as the S-selanylcysteine intermediate.

It belongs to the SelU family. Monomer.

The enzyme catalyses 5-methylaminomethyl-2-thiouridine(34) in tRNA + selenophosphate + (2E)-geranyl diphosphate + H2O + H(+) = 5-methylaminomethyl-2-selenouridine(34) in tRNA + (2E)-thiogeraniol + phosphate + diphosphate. It catalyses the reaction 5-methylaminomethyl-2-thiouridine(34) in tRNA + (2E)-geranyl diphosphate = 5-methylaminomethyl-S-(2E)-geranyl-thiouridine(34) in tRNA + diphosphate. The catalysed reaction is 5-methylaminomethyl-S-(2E)-geranyl-thiouridine(34) in tRNA + selenophosphate + H(+) = 5-methylaminomethyl-2-(Se-phospho)selenouridine(34) in tRNA + (2E)-thiogeraniol. It carries out the reaction 5-methylaminomethyl-2-(Se-phospho)selenouridine(34) in tRNA + H2O = 5-methylaminomethyl-2-selenouridine(34) in tRNA + phosphate. Involved in the post-transcriptional modification of the uridine at the wobble position (U34) of tRNA(Lys), tRNA(Glu) and tRNA(Gln). Catalyzes the conversion of 2-thiouridine (S2U-RNA) to 2-selenouridine (Se2U-RNA). Acts in a two-step process involving geranylation of 2-thiouridine (S2U) to S-geranyl-2-thiouridine (geS2U) and subsequent selenation of the latter derivative to 2-selenouridine (Se2U) in the tRNA chain. The sequence is that of tRNA 2-selenouridine synthase from Escherichia coli O157:H7.